The sequence spans 376 residues: Enoyl-[acyl-carrier-protein] reductase, mitochondrial (376 aa).

The active-site Proton donor is tyrosine 72. NADP(+) is bound by residues asparagine 154, 182 to 185 (TSAV), 205 to 207 (RDR), 280 to 283 (YGGM), 305 to 307 (YWI), and lysine 369.

The protein belongs to the zinc-containing alcohol dehydrogenase family. Quinone oxidoreductase subfamily. Homodimer.

It localises to the mitochondrion matrix. It catalyses the reaction a 2,3-saturated acyl-[ACP] + NADP(+) = a (2E)-enoyl-[ACP] + NADPH + H(+). Catalyzes the NADPH-dependent reduction of trans-2-enoyl thioesters in mitochondrial fatty acid synthesis (fatty acid synthesis type II). Fatty acid chain elongation in mitochondria uses acyl carrier protein (ACP) as an acyl group carrier, but the enzyme accepts both ACP and CoA thioesters as substrates in vitro. Required for respiration and the maintenance of the mitochondrial compartment. In Eremothecium gossypii (strain ATCC 10895 / CBS 109.51 / FGSC 9923 / NRRL Y-1056) (Yeast), this protein is Enoyl-[acyl-carrier-protein] reductase, mitochondrial (ETR1).